Reading from the N-terminus, the 422-residue chain is Lactose-binding protein (422 aa).

An N-terminal signal peptide occupies residues 1–28 (MDYSRLLKRSVSAALTAAALLCSTAAFA). The segment at 246–277 (SNDGIRALTSGDVASVLRGVWITGTVKSQPDQ) is lactose-binding.

It belongs to the bacterial solute-binding protein 1 family.

It localises to the periplasm. Its function is as follows. Part of the binding-protein-dependent transport system for lactose. This is Lactose-binding protein (lacE) from Rhizobium radiobacter (Agrobacterium tumefaciens).